A 523-amino-acid chain; its full sequence is GMP synthase [glutamine-hydrolyzing] (523 aa).

The Glutamine amidotransferase type-1 domain maps to 8–205; sequence KILILDFGSQ…VENICGCARS (198 aa). Residue cysteine 85 is the Nucleophile of the active site. Catalysis depends on residues histidine 179 and glutamate 181. Residues 206–398 enclose the GMPS ATP-PPase domain; it reads WTPENIIEDA…LGLPAEMLNR (193 aa). 233-239 contacts ATP; it reads SGGVDSS.

In terms of assembly, homodimer.

It catalyses the reaction XMP + L-glutamine + ATP + H2O = GMP + L-glutamate + AMP + diphosphate + 2 H(+). Its pathway is purine metabolism; GMP biosynthesis; GMP from XMP (L-Gln route): step 1/1. In terms of biological role, catalyzes the synthesis of GMP from XMP. The polypeptide is GMP synthase [glutamine-hydrolyzing] (Haemophilus ducreyi (strain 35000HP / ATCC 700724)).